Here is a 253-residue protein sequence, read N- to C-terminus: Hydroxyacylglutathione hydrolase (253 aa).

Positions 54, 56, 58, 59, 112, 131, and 169 each coordinate Zn(2+).

It belongs to the metallo-beta-lactamase superfamily. Glyoxalase II family. Monomer. The cofactor is Zn(2+).

The enzyme catalyses an S-(2-hydroxyacyl)glutathione + H2O = a 2-hydroxy carboxylate + glutathione + H(+). Its pathway is secondary metabolite metabolism; methylglyoxal degradation; (R)-lactate from methylglyoxal: step 2/2. Its function is as follows. Thiolesterase that catalyzes the hydrolysis of S-D-lactoyl-glutathione to form glutathione and D-lactic acid. The polypeptide is Hydroxyacylglutathione hydrolase (Bartonella quintana (strain Toulouse) (Rochalimaea quintana)).